Consider the following 279-residue polypeptide: Elongation factor Ts (279 aa).

Residues 80 to 83 (TDFV) are involved in Mg(2+) ion dislocation from EF-Tu.

The protein belongs to the EF-Ts family.

The protein resides in the cytoplasm. Its function is as follows. Associates with the EF-Tu.GDP complex and induces the exchange of GDP to GTP. It remains bound to the aminoacyl-tRNA.EF-Tu.GTP complex up to the GTP hydrolysis stage on the ribosome. This chain is Elongation factor Ts, found in Borrelia garinii subsp. bavariensis (strain ATCC BAA-2496 / DSM 23469 / PBi) (Borreliella bavariensis).